The sequence spans 150 residues: Seminal ribonuclease (150 aa).

Positions 1–26 (MALKSLVVLPLLVLVLLLVRVQPSLG) are cleaved as a signal peptide. 2 residues coordinate substrate: Lys-33 and Arg-36. His-38 functions as the Proton acceptor in the catalytic mechanism. Intrachain disulfides connect Cys-52–Cys-110, Cys-66–Cys-121, Cys-84–Cys-136, and Cys-91–Cys-98. Residues 67–71 (KPVNT) and Lys-92 contribute to the substrate site. Asn-93 carries the deamidated asparagine; by deterioration modification. Residue Arg-111 participates in substrate binding. His-145 functions as the Proton donor in the catalytic mechanism.

Belongs to the pancreatic ribonuclease family. Homodimer; disulfide-linked. In terms of tissue distribution, seminal plasma. Can reach 3% of the protein content of this fluid.

It localises to the secreted. It catalyses the reaction an [RNA] containing cytidine + H2O = an [RNA]-3'-cytidine-3'-phosphate + a 5'-hydroxy-ribonucleotide-3'-[RNA].. The catalysed reaction is an [RNA] containing uridine + H2O = an [RNA]-3'-uridine-3'-phosphate + a 5'-hydroxy-ribonucleotide-3'-[RNA].. With respect to regulation, allosteric regulation by both substrate and reaction products. This enzyme hydrolyzes both single- and double-stranded RNA. This is Seminal ribonuclease (SRN) from Bos taurus (Bovine).